A 161-amino-acid polypeptide reads, in one-letter code: uncharacterized protein (161 aa).

Belongs to the M.jannaschii MJ0150/MJ0739/MJ0745/MJ1460/MJ1642 family.

This is an uncharacterized protein from Methanocaldococcus jannaschii (strain ATCC 43067 / DSM 2661 / JAL-1 / JCM 10045 / NBRC 100440) (Methanococcus jannaschii).